A 486-amino-acid polypeptide reads, in one-letter code: Homoserine O-acetyltransferase (486 aa).

The 371-residue stretch at 66–436 (NVLVICHALT…PEGHDAFLLE (371 aa)) folds into the AB hydrolase-1 domain. Residue S162 is part of the active site. The active-site Nucleophile is S162. A disordered region spans residues 248-274 (KFSRRSPSIAQQQKAQKAEVRKPSTVS). A compositionally biased stretch (polar residues) spans 250–262 (SRRSPSIAQQQKA). Residues D401 and H430 contribute to the active site.

The protein belongs to the AB hydrolase superfamily. MetX family.

The catalysed reaction is L-homoserine + acetyl-CoA = O-acetyl-L-homoserine + CoA. Its pathway is amino-acid biosynthesis; L-methionine biosynthesis via de novo pathway; O-acetyl-L-homoserine from L-homoserine: step 1/1. In terms of biological role, commits homoserine to the methionine biosynthesis pathway by catalyzing its O-acetylation. The chain is Homoserine O-acetyltransferase (MET2) from Saccharomyces pastorianus (Lager yeast).